The chain runs to 243 residues: Peptide deformylase, mitochondrial (243 aa).

The transit peptide at 1 to 39 (MARLWGALSLWPLWAAVPWGGAAAVGVRACSSTAAPDGV) directs the protein to the mitochondrion. Residues Gly71, Pro169, and Gly171 each coordinate substrate. The tract at residues 165 to 175 (LVTFPEGCESV) is hydrophobic dimerization interface. 2 residues coordinate Co(2+): Cys172 and His214. Residue Glu215 is part of the active site. Residue His218 participates in Co(2+) binding.

Belongs to the polypeptide deformylase family. As to quaternary structure, homodimer. Co(2+) is required as a cofactor. Ubiquitous.

It is found in the mitochondrion. It catalyses the reaction N-terminal N-formyl-L-methionyl-[peptide] + H2O = N-terminal L-methionyl-[peptide] + formate. In terms of biological role, removes the formyl group from the N-terminal Met of newly synthesized proteins. This Homo sapiens (Human) protein is Peptide deformylase, mitochondrial.